The sequence spans 539 residues: GMP synthase [glutamine-hydrolyzing] (539 aa).

In terms of domain architecture, Glutamine amidotransferase type-1 spans 4–202 (KILILDFGSQ…VLQIAGAKPD (199 aa)). Cys81 acts as the Nucleophile in catalysis. Residues His176 and Glu178 contribute to the active site. One can recognise a GMPS ATP-PPase domain in the interval 203-395 (WIMSNHIEEA…LGLPPEMVYR (193 aa)). 230 to 236 (SGGVDSS) provides a ligand contact to ATP.

As to quaternary structure, homodimer.

The enzyme catalyses XMP + L-glutamine + ATP + H2O = GMP + L-glutamate + AMP + diphosphate + 2 H(+). It participates in purine metabolism; GMP biosynthesis; GMP from XMP (L-Gln route): step 1/1. Catalyzes the synthesis of GMP from XMP. The chain is GMP synthase [glutamine-hydrolyzing] from Burkholderia ambifaria (strain ATCC BAA-244 / DSM 16087 / CCUG 44356 / LMG 19182 / AMMD) (Burkholderia cepacia (strain AMMD)).